A 609-amino-acid polypeptide reads, in one-letter code: Aminopeptidase ltah-1.1 (609 aa).

Residues 137–139 and 268–273 contribute to the substrate site; these read QCQ and PFGGME. His-297 contributes to the Zn(2+) binding site. The active-site Proton acceptor is the Glu-298. 2 residues coordinate Zn(2+): His-301 and Glu-320. The active-site Proton donor is the Tyr-387. 564-566 is a binding site for substrate; sequence RMK.

This sequence belongs to the peptidase M1 family. It depends on Zn(2+) as a cofactor.

It localises to the cytoplasm. The enzyme catalyses Release of N-terminal Arg and Lys from oligopeptides when P1' is not Pro. Also acts on arylamides of Arg and Lys.. In terms of biological role, aminopeptidase which preferentially removes N-terminal Arg and Lys residues from peptides and proteins. This Caenorhabditis elegans protein is Aminopeptidase ltah-1.1.